The sequence spans 330 residues: Beta-ketoacyl-[acyl-carrier-protein] synthase III (330 aa).

Catalysis depends on residues Cys115 and His255. The ACP-binding stretch occupies residues 256–260 (QANFR). The active site involves Asn285.

Belongs to the thiolase-like superfamily. FabH family. As to quaternary structure, homodimer.

The protein resides in the cytoplasm. It catalyses the reaction malonyl-[ACP] + acetyl-CoA + H(+) = 3-oxobutanoyl-[ACP] + CO2 + CoA. It functions in the pathway lipid metabolism; fatty acid biosynthesis. Catalyzes the condensation reaction of fatty acid synthesis by the addition to an acyl acceptor of two carbons from malonyl-ACP. Catalyzes the first condensation reaction which initiates fatty acid synthesis and may therefore play a role in governing the total rate of fatty acid production. Possesses both acetoacetyl-ACP synthase and acetyl transacylase activities. Its substrate specificity determines the biosynthesis of branched-chain and/or straight-chain of fatty acids. The protein is Beta-ketoacyl-[acyl-carrier-protein] synthase III of Helicobacter pylori (strain P12).